A 114-amino-acid chain; its full sequence is MRRWLLKSKLHRARVTGTEKDYEGSISIDAALLSEADIAVGEQVQVVNVTNGERFETYTIEGESRQMELNGAAARLAETGDVIIVISYGLYVKDEQPEPTVLLLDEENRISERE.

Ser25 acts as the Schiff-base intermediate with substrate; via pyruvic acid in catalysis. Pyruvic acid (Ser) is present on Ser25. Thr57 contacts substrate. The Proton donor role is filled by Tyr58. 71–73 (GAA) serves as a coordination point for substrate.

Belongs to the PanD family. In terms of assembly, heterooctamer of four alpha and four beta subunits. It depends on pyruvate as a cofactor. Is synthesized initially as an inactive proenzyme, which is activated by self-cleavage at a specific serine bond to produce a beta-subunit with a hydroxyl group at its C-terminus and an alpha-subunit with a pyruvoyl group at its N-terminus.

It is found in the cytoplasm. The catalysed reaction is L-aspartate + H(+) = beta-alanine + CO2. It functions in the pathway cofactor biosynthesis; (R)-pantothenate biosynthesis; beta-alanine from L-aspartate: step 1/1. In terms of biological role, catalyzes the pyruvoyl-dependent decarboxylation of aspartate to produce beta-alanine. This is Aspartate 1-decarboxylase from Haloquadratum walsbyi (strain DSM 16790 / HBSQ001).